Reading from the N-terminus, the 189-residue chain is dCTP deaminase, dUMP-forming (189 aa).

Residues 101–106 (KSSLGR), Asp-119, 127–129 (TLE), Gln-148, Tyr-162, and Gln-174 contribute to the dCTP site. Catalysis depends on Glu-129, which acts as the Proton donor/acceptor. Residues 166 to 189 (AVGSKYQGQRGPTPSRSHLNFIKS) are disordered. The segment covering 171–189 (YQGQRGPTPSRSHLNFIKS) has biased composition (polar residues).

This sequence belongs to the dCTP deaminase family. In terms of assembly, homotrimer.

The enzyme catalyses dCTP + 2 H2O = dUMP + NH4(+) + diphosphate. The protein operates within pyrimidine metabolism; dUMP biosynthesis; dUMP from dCTP: step 1/1. Its function is as follows. Bifunctional enzyme that catalyzes both the deamination of dCTP to dUTP and the hydrolysis of dUTP to dUMP without releasing the toxic dUTP intermediate. In Mycolicibacterium smegmatis (strain ATCC 700084 / mc(2)155) (Mycobacterium smegmatis), this protein is dCTP deaminase, dUMP-forming.